A 660-amino-acid chain; its full sequence is DNA topoisomerase I, plasmid (660 aa).

A Toprim domain is found at 1–110 (MKLMIIESPG…LRVTFNEITA (110 aa)). 2 residues coordinate Mg(2+): E7 and D79. Residues 124–550 (DVKRVAAQEA…KVHDQLNMEL (427 aa)) enclose the Topo IA-type catalytic domain. The segment at 158-163 (SAGRVQ) is interaction with DNA. The active-site O-(5'-phospho-DNA)-tyrosine intermediate is the Y287. 2 consecutive C4-type zinc fingers follow at residues 563-589 (CQEC…YPDC) and 613-643 (CVKC…KEGC).

Belongs to the type IA topoisomerase family. As to quaternary structure, monomer. Requires Mg(2+) as cofactor.

It carries out the reaction ATP-independent breakage of single-stranded DNA, followed by passage and rejoining.. Releases the supercoiling and torsional tension of DNA, which is introduced during the DNA replication and transcription, by transiently cleaving and rejoining one strand of the DNA duplex. Introduces a single-strand break via transesterification at a target site in duplex DNA. The scissile phosphodiester is attacked by the catalytic tyrosine of the enzyme, resulting in the formation of a DNA-(5'-phosphotyrosyl)-enzyme intermediate and the expulsion of a 3'-OH DNA strand. The free DNA strand then undergoes passage around the unbroken strand, thus removing DNA supercoils. Finally, in the religation step, the DNA 3'-OH attacks the covalent intermediate to expel the active-site tyrosine and restore the DNA phosphodiester backbone. In Xylella fastidiosa (strain 9a5c), this protein is DNA topoisomerase I, plasmid.